A 202-amino-acid chain; its full sequence is Imidazoleglycerol-phosphate dehydratase (202 aa).

This sequence belongs to the imidazoleglycerol-phosphate dehydratase family.

It localises to the cytoplasm. It catalyses the reaction D-erythro-1-(imidazol-4-yl)glycerol 3-phosphate = 3-(imidazol-4-yl)-2-oxopropyl phosphate + H2O. It participates in amino-acid biosynthesis; L-histidine biosynthesis; L-histidine from 5-phospho-alpha-D-ribose 1-diphosphate: step 6/9. The protein is Imidazoleglycerol-phosphate dehydratase of Parasynechococcus marenigrum (strain WH8102).